Reading from the N-terminus, the 360-residue chain is Photosystem II protein D1 (360 aa).

The next 3 helical transmembrane spans lie at 29 to 46 (YIGW…TATS), 118 to 133 (HFLL…EWEL), and 142 to 156 (WIFV…AASA). Position 118 (H118) interacts with chlorophyll a. Y126 contacts pheophytin a. 2 residues coordinate [CaMn4O5] cluster: D170 and E189. The chain crosses the membrane as a helical span at residues 197–218 (FHMAGVAGVFGGSLFSAMHGSL). H198 contributes to the chlorophyll a binding site. Residues H215 and 264 to 265 (SF) each bind a quinone. Residue H215 participates in Fe cation binding. Fe cation is bound at residue H272. A helical membrane pass occupies residues 274–288 (FLALWPVVGIWLTAM). Positions 332, 333, 342, and 344 each coordinate [CaMn4O5] cluster. A propeptide spanning residues 345–360 (SGEVLPVALTAPAVNG) is cleaved from the precursor.

This sequence belongs to the reaction center PufL/M/PsbA/D family. PSII is composed of 1 copy each of membrane proteins PsbA, PsbB, PsbC, PsbD, PsbE, PsbF, PsbH, PsbI, PsbJ, PsbK, PsbL, PsbM, PsbT, PsbX, PsbY, PsbZ, Psb30/Ycf12, at least 3 peripheral proteins of the oxygen-evolving complex and a large number of cofactors. It forms dimeric complexes. Requires The D1/D2 heterodimer binds P680, chlorophylls that are the primary electron donor of PSII, and subsequent electron acceptors. It shares a non-heme iron and each subunit binds pheophytin, quinone, additional chlorophylls, carotenoids and lipids. D1 provides most of the ligands for the Mn4-Ca-O5 cluster of the oxygen-evolving complex (OEC). There is also a Cl(-1) ion associated with D1 and D2, which is required for oxygen evolution. The PSII complex binds additional chlorophylls, carotenoids and specific lipids. as cofactor. Post-translationally, tyr-161 forms a radical intermediate that is referred to as redox-active TyrZ, YZ or Y-Z. In terms of processing, C-terminally processed by CTPA; processing is essential to allow assembly of the oxygen-evolving complex and thus photosynthetic growth.

It localises to the plastid. It is found in the chloroplast thylakoid membrane. The enzyme catalyses 2 a plastoquinone + 4 hnu + 2 H2O = 2 a plastoquinol + O2. Functionally, photosystem II (PSII) is a light-driven water:plastoquinone oxidoreductase that uses light energy to abstract electrons from H(2)O, generating O(2) and a proton gradient subsequently used for ATP formation. It consists of a core antenna complex that captures photons, and an electron transfer chain that converts photonic excitation into a charge separation. The D1/D2 (PsbA/PsbD) reaction center heterodimer binds P680, the primary electron donor of PSII as well as several subsequent electron acceptors. In Phaeodactylum tricornutum (strain CCAP 1055/1), this protein is Photosystem II protein D1.